A 287-amino-acid chain; its full sequence is Inorganic pyrophosphatase (287 aa).

R79 lines the diphosphate pocket. D116, D121, and D153 together coordinate Mg(2+).

This sequence belongs to the PPase family. It depends on Mg(2+) as a cofactor.

The protein resides in the cytoplasm. It carries out the reaction diphosphate + H2O = 2 phosphate + H(+). The sequence is that of Inorganic pyrophosphatase (IPP1) from Debaryomyces hansenii (strain ATCC 36239 / CBS 767 / BCRC 21394 / JCM 1990 / NBRC 0083 / IGC 2968) (Yeast).